The primary structure comprises 584 residues: 2-succinyl-5-enolpyruvyl-6-hydroxy-3-cyclohexene-1-carboxylate synthase (584 aa).

It belongs to the TPP enzyme family. MenD subfamily. Homodimer. It depends on Mg(2+) as a cofactor. Mn(2+) is required as a cofactor. Requires thiamine diphosphate as cofactor.

The enzyme catalyses isochorismate + 2-oxoglutarate + H(+) = 5-enolpyruvoyl-6-hydroxy-2-succinyl-cyclohex-3-ene-1-carboxylate + CO2. The protein operates within quinol/quinone metabolism; 1,4-dihydroxy-2-naphthoate biosynthesis; 1,4-dihydroxy-2-naphthoate from chorismate: step 2/7. It functions in the pathway quinol/quinone metabolism; menaquinone biosynthesis. Catalyzes the thiamine diphosphate-dependent decarboxylation of 2-oxoglutarate and the subsequent addition of the resulting succinic semialdehyde-thiamine pyrophosphate anion to isochorismate to yield 2-succinyl-5-enolpyruvyl-6-hydroxy-3-cyclohexene-1-carboxylate (SEPHCHC). The protein is 2-succinyl-5-enolpyruvyl-6-hydroxy-3-cyclohexene-1-carboxylate synthase of Bacillus thuringiensis subsp. konkukian (strain 97-27).